Here is a 192-residue protein sequence, read N- to C-terminus: LQWLILDHNLLENSKIKGKVFSKLKQLKKLHINHNNLTESVGPLPKSLEDLQLTHNKITKLGSFDGLLNLTFVHLQHNQLKEDAVSAAFKGLKSLEYLDLSFNQMSKLPSGLPASLLTLYLDNNKISDIPDEYFKRFNGLQYLRLSHNELADSGIPGNSFNISSLVELDLSYNKLKNIPTVNENLENYYLEV.

LRR repeat units lie at residues 1-23 (LQWLILDHNLLENSKIKGKVFSK), 26-46 (QLKKLHINHNNLTESVGPLPK), 47-68 (SLEDLQLTHNKITKLGSFDGLL), 69-90 (NLTFVHLQHNQLKEDAVSAAFK), 94-114 (SLEYLDLSFNQMSKLPSGLPA), 115-136 (SLLTLYLDNNKISDIPDEYFKR), 139-162 (GLQYLRLSHNELADSGIPGNSFNI), 164-185 (SLVELDLSYNKLKNIPTVNENL), and 186-192 (ENYYLEV).

This sequence belongs to the small leucine-rich proteoglycan (SLRP) family. SLRP class II subfamily. Binds to laminin. Post-translationally, sulfated on tyrosine residue(s). Contains keratan sulfate.

It is found in the secreted. The protein resides in the extracellular space. Its subcellular location is the extracellular matrix. In Oryctolagus cuniculus (Rabbit), this protein is Lumican (LUM).